Consider the following 507-residue polypeptide: Glucose-6-phosphate isomerase (507 aa).

The active-site Proton donor is the E338. Residues H369 and K479 contribute to the active site.

This sequence belongs to the GPI family.

The protein localises to the cytoplasm. The catalysed reaction is alpha-D-glucose 6-phosphate = beta-D-fructose 6-phosphate. It participates in carbohydrate biosynthesis; gluconeogenesis. Its pathway is carbohydrate degradation; glycolysis; D-glyceraldehyde 3-phosphate and glycerone phosphate from D-glucose: step 2/4. Functionally, provides a gateway for fructose into the Entner-Doudouroff pathway. Catalyzes the reversible isomerization of glucose-6-phosphate to fructose-6-phosphate. This Zymomonas mobilis subsp. mobilis (strain ATCC 31821 / ZM4 / CP4) protein is Glucose-6-phosphate isomerase.